Here is a 709-residue protein sequence, read N- to C-terminus: Polyribonucleotide nucleotidyltransferase (709 aa).

Residues Asp-491 and Asp-497 each contribute to the Mg(2+) site. The region spanning 557-617 is the KH domain; it reads PKSESFMIPP…ENLQKAKTFI (61 aa). Residues 641–709 enclose the S1 motif domain; it reads GERFVGKIKK…KNKVELGLVE (69 aa).

Belongs to the polyribonucleotide nucleotidyltransferase family. The cofactor is Mg(2+).

Its subcellular location is the cytoplasm. The enzyme catalyses RNA(n+1) + phosphate = RNA(n) + a ribonucleoside 5'-diphosphate. Functionally, involved in mRNA degradation. Catalyzes the phosphorolysis of single-stranded polyribonucleotides processively in the 3'- to 5'-direction. This chain is Polyribonucleotide nucleotidyltransferase, found in Helicobacter hepaticus (strain ATCC 51449 / 3B1).